The sequence spans 381 residues: Pentraxin-related protein PTX3 (381 aa).

Residues 1-17 (MHLLAILFCALWSAVLA) form the signal peptide. Coiled-coil stretches lie at residues 74 to 101 (LQATDDVLRGELQRLREELGRLAESLAR) and 143 to 167 (EEAGRALAAVLEELRQTRADLHAVQ). 2 cysteine pairs are disulfide-bonded: C179-C357 and C210-C271. A Pentraxin (PTX) domain is found at 179-381 (CETAILFPMR…QPHGGAQYVS (203 aa)). N220 carries an N-linked (GlcNAc...) asparagine glycan.

Homooctamer; disulfide-linked. Binds to C1q. As to quaternary structure, (Microbial infection) Interacts with SARS coronavirus-2/SARS-CoV-2 Nucleoprotein and Spike protein homotrimer. Post-translationally, glycosylated.

It is found in the secreted. Plays a role in the regulation of innate resistance to pathogens, inflammatory reactions, possibly clearance of self-components and female fertility. The chain is Pentraxin-related protein PTX3 from Homo sapiens (Human).